A 246-amino-acid chain; its full sequence is Bis(5'-nucleosyl)-tetraphosphatase PrpE [asymmetrical] (246 aa).

It belongs to the PrpE family. Ni(2+) serves as cofactor.

The catalysed reaction is P(1),P(4)-bis(5'-guanosyl) tetraphosphate + H2O = GMP + GTP + 2 H(+). In terms of biological role, asymmetrically hydrolyzes Ap4p to yield AMP and ATP. This Bacillus cereus (strain ATCC 10987 / NRS 248) protein is Bis(5'-nucleosyl)-tetraphosphatase PrpE [asymmetrical].